We begin with the raw amino-acid sequence, 445 residues long: Anthranilate N-benzoyltransferase protein 3 (445 aa).

Active-site proton acceptor residues include H164 and D392.

Belongs to the plant acyltransferase family. Post-translationally, N-terminus is blocked.

It catalyses the reaction anthranilate + benzoyl-CoA = N-benzoylanthranilate + CoA. The protein operates within phytoalexin biosynthesis; methoxydianthramide B biosynthesis. Functionally, catalyzes the formation of N-benzoylanthranilate, in the course of methoxydianthramide B, a phytoalexin. Phytoalexins are produced in response to infection by parasites, and are essential for the expression of disease resistance. In Dianthus caryophyllus (Carnation), this protein is Anthranilate N-benzoyltransferase protein 3 (HCBT3).